The sequence spans 521 residues: Lipid-translocating exporter-like protein RTA1 (521 aa).

Transmembrane regions (helical) follow at residues 186-206 (GAPI…SWQC), 211-231 (AWKL…GYAL), 249-269 (LALF…LELA), 292-312 (VTAF…SGVS), 332-352 (LVAL…SVLF), 371-391 (TLMT…FRLV), and 418-438 (EAYF…LWNV). Residues 493 to 521 (THSQPQELYENPNGNGHKKFRLGNGGRAT) form a disordered region.

Belongs to the lipid-translocating exporter (LTE) (TC 9.A.26.1) family.

Its subcellular location is the membrane. Lipid-translocating exporter-like protein; part of the gene cluster that mediates the biosynthesis of phomenoic acid, a long chain aliphatic carboxylic acid that does not appear to be essential for pathogenicity but may play a role in allowing to outcompete other fungi in the environmental niche via its antifungal properties. The polypeptide is Lipid-translocating exporter-like protein RTA1 (Leptosphaeria maculans (strain JN3 / isolate v23.1.3 / race Av1-4-5-6-7-8) (Blackleg fungus)).